The primary structure comprises 611 residues: Protein ral2 (611 aa).

Kelch repeat units lie at residues 43 to 91, 96 to 149, and 175 to 224; these read EAFV…HSGD, KLIF…EVNG, and YLII…VINK. Residue Ser-604 is modified to Phosphoserine.

Essential for mating and for recognition of the mating pheromone, and for the determination of cell shape. Implicated in activation of the ras1 protein. The protein is Protein ral2 (ral2) of Schizosaccharomyces pombe (strain 972 / ATCC 24843) (Fission yeast).